A 707-amino-acid chain; its full sequence is Serine/threonine protein kinase UL97 (707 aa).

Over residues 1–14 (MSSALRSRARSASL) the composition is skewed to low complexity. 4 disordered regions span residues 1–32 (MSSA…PSRA), 113–147 (DGEK…DGYH), 176–199 (FTGG…PLRP), and 231–264 (ESQD…EADS). The segment covering 113–127 (DGEKEDAASDKENQR) has biased composition (basic and acidic residues). The segment covering 178-188 (GGSDPSDSVSG) has biased composition (low complexity). The Proton acceptor role is filled by Asp-456.

Belongs to the protein kinase superfamily. Tyr protein kinase family. HCMV ganciclovir subfamily. As to quaternary structure, interacts with UL83. Autophosphorylates on serine and threonine residues.

It localises to the virion. It catalyses the reaction L-seryl-[protein] + ATP = O-phospho-L-seryl-[protein] + ADP + H(+). The enzyme catalyses L-threonyl-[protein] + ATP = O-phospho-L-threonyl-[protein] + ADP + H(+). Serine/threonine protein kinase that plays important roles in several processes including nuclear viral egress, viral replication or regulation of host cell cycle progression. Participates in the acquisition of tegument during virion morphogenesis in the nucleus. Redistributes the host nuclear lamina by phosphorylating cellular Lamins-A/C. Plays a role in viral DNA synthesis by phosphorylating the DNA polymerase processivity factor UL44. Stimulates host cell cycle to support viral DNA synthesis by phosphorylating host retinoblastoma/RB1 protein. Additional substrates have been identified including host EF1D or H2B. Also phosphorylates host SAMHD1 and thereby counteracts its antiviral effect by reducing its dNTP hydrolase activity. In Homo sapiens (Human), this protein is Serine/threonine protein kinase UL97 (UL97).